Consider the following 159-residue polypeptide: Phosphopantetheine adenylyltransferase (159 aa).

Serine 8 serves as a coordination point for substrate. Residues 8–9 (SF) and histidine 16 contribute to the ATP site. 3 residues coordinate substrate: lysine 40, threonine 72, and arginine 86. ATP-binding positions include 87–89 (GLR), glutamate 97, and 122–128 (HSFVSSS).

It belongs to the bacterial CoaD family. In terms of assembly, homohexamer. It depends on Mg(2+) as a cofactor.

It is found in the cytoplasm. It carries out the reaction (R)-4'-phosphopantetheine + ATP + H(+) = 3'-dephospho-CoA + diphosphate. It participates in cofactor biosynthesis; coenzyme A biosynthesis; CoA from (R)-pantothenate: step 4/5. Functionally, reversibly transfers an adenylyl group from ATP to 4'-phosphopantetheine, yielding dephospho-CoA (dPCoA) and pyrophosphate. The sequence is that of Phosphopantetheine adenylyltransferase from Synechococcus sp. (strain JA-3-3Ab) (Cyanobacteria bacterium Yellowstone A-Prime).